The sequence spans 237 residues: DNA repair protein RecO (237 aa).

The protein belongs to the RecO family.

In terms of biological role, involved in DNA repair and RecF pathway recombination. The chain is DNA repair protein RecO from Rickettsia conorii (strain ATCC VR-613 / Malish 7).